We begin with the raw amino-acid sequence, 468 residues long: Sorting and assembly machinery component 50 homolog (468 aa).

The tract at residues 1–24 (MGTVHARSLDPLPMNGPDFGSHDD) is disordered. One can recognise a POTRA domain in the interval 44-124 (VVVQRVHFEG…LDVTFEVTEL (81 aa)).

The protein belongs to the SAM50/omp85 family. Associates with the mitochondrial contact site and cristae organizing system (MICOS) complex (also known as MINOS or MitOS complex).

It is found in the mitochondrion outer membrane. In terms of biological role, may play a role in the maintenance of the structure of mitochondrial cristae. The polypeptide is Sorting and assembly machinery component 50 homolog (samm50) (Xenopus tropicalis (Western clawed frog)).